Consider the following 61-residue polypeptide: Small ribosomal subunit protein uS14 (61 aa).

Zn(2+)-binding residues include Cys24, Cys27, Cys40, and Cys43.

The protein belongs to the universal ribosomal protein uS14 family. Zinc-binding uS14 subfamily. Part of the 30S ribosomal subunit. Contacts proteins S3 and S10. Zn(2+) serves as cofactor.

Binds 16S rRNA, required for the assembly of 30S particles and may also be responsible for determining the conformation of the 16S rRNA at the A site. The protein is Small ribosomal subunit protein uS14 of Sulfurovum sp. (strain NBC37-1).